Consider the following 353-residue polypeptide: Methylthioribose-1-phosphate isomerase (353 aa).

Substrate is bound by residues 51–53, Arg94, and Gln199; that span reads RGA. The active-site Proton donor is Asp240. 250-251 lines the substrate pocket; the sequence is NK.

Belongs to the EIF-2B alpha/beta/delta subunits family. MtnA subfamily. In terms of assembly, homodimer.

The catalysed reaction is 5-(methylsulfanyl)-alpha-D-ribose 1-phosphate = 5-(methylsulfanyl)-D-ribulose 1-phosphate. The protein operates within amino-acid biosynthesis; L-methionine biosynthesis via salvage pathway; L-methionine from S-methyl-5-thio-alpha-D-ribose 1-phosphate: step 1/6. Its function is as follows. Catalyzes the interconversion of methylthioribose-1-phosphate (MTR-1-P) into methylthioribulose-1-phosphate (MTRu-1-P). This is Methylthioribose-1-phosphate isomerase from Bacillus cereus (strain ATCC 14579 / DSM 31 / CCUG 7414 / JCM 2152 / NBRC 15305 / NCIMB 9373 / NCTC 2599 / NRRL B-3711).